A 518-amino-acid polypeptide reads, in one-letter code: MAFWAGGSPSVVDYFPSEDFYRCGYCKNESGSRSNGMWAHSMTVQDYQDLIDRGWRRSGKYVYKPVMNQTCCPQYTIRCRPLQFQPSKSHKKVLKKMLKFLAKGEVPKGSCEDEPMDSTMDDAVAGDFALINKLDIQCDLKTLSDDVKESLQSEGKNSKKEEPHELLQSQDSVGEKLGSGEPSHSVKVHTVPKPGKGADLSKPPCRKAKEIRKERKRLKLMQQNPAGELEGFQAQGHPPSLFPPKAKSNQPKSLEDLIFESLPENASHKLEVRLVPASFEDPEFKSSFSQSFSLYVKYQVAIHQDLPDECGKTEFTRFLCSSPLEAETPPNGPDCGYGSFHQQYWLDGKIIAVGVIDILPNYVSSVYLYYDPDYSFLSLGVYSALREIAFTRQLHEKTSQLSYYYMGFYIHSCPKMKYKGQYRPSDLLCPETYVWVPIEQCLPSLENSKYCRFNQDPEAVDEDRSTEPDRLQVFHKRAIMPYGVYKKQQKDPSEEAAVLQYASLVGQKCSERMLLFRN.

Over residues 149 to 165 (ESLQSEGKNSKKEEPHE) the composition is skewed to basic and acidic residues. The segment at 149 to 207 (ESLQSEGKNSKKEEPHELLQSQDSVGEKLGSGEPSHSVKVHTVPKPGKGADLSKPPCRK) is disordered. Serine 169 is modified (phosphoserine).

It belongs to the R-transferase family. In terms of assembly, monomer. Interacts with LIAT1; LIAT1 is not a substrate of ATE1, the interaction takes place in the cytoplasm and seems to increase ATE1 arginyltransferase activity.

Its subcellular location is the nucleus. The protein localises to the cytoplasm. It catalyses the reaction an N-terminal L-alpha-aminoacyl-[protein] + L-arginyl-tRNA(Arg) = an N-terminal L-arginyl-L-aminoacyl-[protein] + tRNA(Arg) + H(+). In terms of biological role, involved in the post-translational conjugation of arginine to the N-terminal aspartate or glutamate of a protein. This arginylation is required for degradation of the protein via the ubiquitin pathway. Does not arginylate cysteine residues. This is Arginyl-tRNA--protein transferase 1 (ATE1) from Macaca fascicularis (Crab-eating macaque).